The primary structure comprises 446 residues: Amino-acid acetyltransferase (446 aa).

Positions 299-438 (EQVRDAEIDD…QKLYNFQRKS (140 aa)) constitute an N-acetyltransferase domain.

It belongs to the acetyltransferase family. ArgA subfamily.

The protein resides in the cytoplasm. The enzyme catalyses L-glutamate + acetyl-CoA = N-acetyl-L-glutamate + CoA + H(+). Its pathway is amino-acid biosynthesis; L-arginine biosynthesis; N(2)-acetyl-L-ornithine from L-glutamate: step 1/4. This is Amino-acid acetyltransferase from Aliivibrio fischeri (strain ATCC 700601 / ES114) (Vibrio fischeri).